We begin with the raw amino-acid sequence, 732 residues long: Interleukin-31 receptor subunit alpha (732 aa).

The signal sequence occupies residues 1–19; the sequence is MMWTWALWMLPSLCKFSLA. The Extracellular segment spans residues 20 to 519; that stretch reads ALPAKPENIS…FKTLSFSVFE (500 aa). 5 Fibronectin type-III domains span residues 24–122, 124–225, 223–315, 319–416, and 421–515; these read KPEN…IAKT, PPKI…TEEE, EEEA…PVAT, PAIQ…QAYA, and PSEG…TLSF. N-linked (GlcNAc...) asparagine glycosylation is found at Asn37, Asn67, Asn93, Asn166, Asn187, Asn277, Asn283, Asn395, Asn455, and Asn504. The chain crosses the membrane as a helical span at residues 520–540; it reads IILITSLIGGGLLILIILTVA. Residues 541-732 are Cytoplasmic-facing; it reads YGLKKPNKLT…KLPEHTKGEV (192 aa).

This sequence belongs to the type I cytokine receptor family. Type 2 subfamily. In terms of assembly, heterodimer with OSMR. Interacts with JAK1 and STAT3. In terms of processing, N-glycosylated. As to expression, expressed in CD14- and CD56-positive blood cells. Expressed in macrophages. Expressed in keratinocytes. Expressed in a subset of dorsal root ganglia neurons (at protein level). Expressed at low levels in testis, ovary, brain, prostate, placenta, thymus, bone marrow, trachea and skin. Expressed in bronchial and alveolar epithelial cells and pulmonary fibroblasts. Detected in all of the myelomonocytic lineage. Isoform 6: Expressed at higher levels in lesional skin compared to healthy skin of atopic dermatitis patients.

The protein resides in the cell membrane. It localises to the presynaptic cell membrane. The protein localises to the cell projection. Its subcellular location is the axon. In terms of biological role, associates with OSMR to form the interleukin-31 receptor which activates STAT3 and to a lower extent STAT1 and STAT5. May function in skin immunity. Mediates IL31-induced itch, probably in a manner dependent on cation channels TRPA1 and TRPV1. Positively regulates numbers and cycling status of immature subsets of myeloid progenitor cells in bone marrow in vivo and enhances myeloid progenitor cell survival in vitro. The protein is Interleukin-31 receptor subunit alpha (IL31RA) of Homo sapiens (Human).